The primary structure comprises 547 residues: Chaperonin GroEL (547 aa).

ATP-binding positions include 30–33, Lys51, 87–91, Gly415, and Asp496; these read TLGP and DGTTT. The interval 527–547 is disordered; the sequence is ENTPDMPAMPPGGMGGMGGMY. The span at 538 to 547 shows a compositional bias: gly residues; sequence GGMGGMGGMY.

This sequence belongs to the chaperonin (HSP60) family. As to quaternary structure, forms a cylinder of 14 subunits composed of two heptameric rings stacked back-to-back. Interacts with the co-chaperonin GroES.

The protein resides in the cytoplasm. It catalyses the reaction ATP + H2O + a folded polypeptide = ADP + phosphate + an unfolded polypeptide.. Functionally, together with its co-chaperonin GroES, plays an essential role in assisting protein folding. The GroEL-GroES system forms a nano-cage that allows encapsulation of the non-native substrate proteins and provides a physical environment optimized to promote and accelerate protein folding. The sequence is that of Chaperonin GroEL from Chlorobium phaeovibrioides (strain DSM 265 / 1930) (Prosthecochloris vibrioformis (strain DSM 265)).